We begin with the raw amino-acid sequence, 520 residues long: Maturase K (520 aa).

This sequence belongs to the intron maturase 2 family. MatK subfamily.

The protein localises to the plastid. The protein resides in the chloroplast. Usually encoded in the trnK tRNA gene intron. Probably assists in splicing its own and other chloroplast group II introns. This Linum perenne (Perennial flax) protein is Maturase K.